Here is a 507-residue protein sequence, read N- to C-terminus: Dolichyl pyrophosphate Man9GlcNAc2 alpha-1,3-glucosyltransferase (507 aa).

Topologically, residues 1–3 are cytoplasmic; that stretch reads MEK. A helical transmembrane segment spans residues 4-24; that stretch reads WSLMTITVLLALTVRWTVSLG. At 25 to 114 the chain is on the lumenal side; it reads SYSGAGKPPM…SQSHKLFMRT (90 aa). The N-linked (GlcNAc...) asparagine glycan is linked to asparagine 59. The helical transmembrane segment at 115-135 threads the bilayer; sequence TVFVADLLIYIPAVILYCCSL. At 136 to 143 the chain is on the cytoplasmic side; it reads KETSTKKK. A helical transmembrane segment spans residues 144–164; that stretch reads VSSALCILLYPGLILIDHGHF. Topologically, residues 165 to 168 are lumenal; it reads QYNS. A helical transmembrane segment spans residues 169-189; it reads VSLGFALWGVLCLSYDWDLLG. At 190–226 the chain is on the cytoplasmic side; sequence SAAFCLALNYKQMELYHSLPFFCYLLGKCFKKGLKGK. A helical membrane pass occupies residues 227–247; the sequence is GLLLLIKLAGTVVASFAVCWL. The Lumenal portion of the chain corresponds to 248–297; that stretch reads PFCTDVEQIMQVLRRLFPIDRGLFEDKVANIWCSLSVLIKIKNVVSPQTQ. A helical transmembrane segment spans residues 298–318; that stretch reads LKLSFAVTFLSLLPTCIKLTV. At 319 to 338 the chain is on the cytoplasmic side; the sequence is QPSLRGFKLTLVSCALSFFL. A helical membrane pass occupies residues 339–359; it reads FSFQVHEKSILLVSVPVCLII. Topologically, residues 360–361 are lumenal; that stretch reads NE. A helical transmembrane segment spans residues 362–382; sequence VPFMATWFLLVSTFSMLPLLL. Residues 383-387 lie on the Cytoplasmic side of the membrane; that stretch reads KDGLL. The helical transmembrane segment at 388–408 threads the bilayer; the sequence is LPYAVTTLAFLSACVASFAIF. The Lumenal segment spans residues 409-441; it reads EKTSAKDLQLKPFSQSLRGYVSWFKLFPKIVRS. The chain crosses the membrane as a helical span at residues 442–462; that stretch reads LFLLSVTLMGVLSVMSAAVHP. At 463–473 the chain is on the cytoplasmic side; the sequence is PQRFPDLFPVS. The helical transmembrane segment at 474–494 threads the bilayer; that stretch reads VSSISCLHFLFFLVYFNVIIL. The Lumenal segment spans residues 495–507; the sequence is WDSKNSRNQKKVS.

It belongs to the ALG6/ALG8 glucosyltransferase family.

The protein localises to the endoplasmic reticulum membrane. The catalysed reaction is an alpha-D-Man-(1-&gt;2)-alpha-D-Man-(1-&gt;2)-alpha-D-Man-(1-&gt;3)-[alpha-D-Man-(1-&gt;2)-alpha-D-Man-(1-&gt;3)-[alpha-D-Man-(1-&gt;2)-alpha-D-Man-(1-&gt;6)]-alpha-D-Man-(1-&gt;6)]-beta-D-Man-(1-&gt;4)-beta-D-GlcNAc-(1-&gt;4)-alpha-D-GlcNAc-diphospho-di-trans,poly-cis-dolichol + a di-trans,poly-cis-dolichyl beta-D-glucosyl phosphate = an alpha-D-Glc-(1-&gt;3)-alpha-D-Man-(1-&gt;2)-alpha-D-Man-(1-&gt;2)-alpha-D-Man-(1-&gt;3)-[alpha-D-Man-(1-&gt;2)-alpha-D-Man-(1-&gt;3)-[alpha-D-Man-(1-&gt;2)-alpha-D-Man-(1-&gt;6)]-alpha-D-Man-(1-&gt;6)]-beta-D-Man-(1-&gt;4)-beta-D-GlcNAc-(1-&gt;4)-alpha-D-GlcNAc-diphospho-di-trans,poly-cis-dolichol + a di-trans,poly-cis-dolichyl phosphate + H(+). It participates in protein modification; protein glycosylation. Functionally, dolichyl pyrophosphate Man9GlcNAc2 alpha-1,3-glucosyltransferase that operates in the biosynthetic pathway of dolichol-linked oligosaccharides, the glycan precursors employed in protein asparagine (N)-glycosylation. The assembly of dolichol-linked oligosaccharides begins on the cytosolic side of the endoplasmic reticulum membrane and finishes in its lumen. The sequential addition of sugars to dolichol pyrophosphate produces dolichol-linked oligosaccharides containing fourteen sugars, including two GlcNAcs, nine mannoses and three glucoses. Once assembled, the oligosaccharide is transferred from the lipid to nascent proteins by oligosaccharyltransferases. In the lumen of the endoplasmic reticulum, adds the first glucose residue from dolichyl phosphate glucose (Dol-P-Glc) onto the lipid-linked oligosaccharide intermediate Man(9)GlcNAc(2)-PP-Dol to produce Glc(1)Man(9)GlcNAc(2)-PP-Dol. Glc(1)Man(9)GlcNAc(2)-PP-Dol is a substrate for ALG8, the following enzyme in the biosynthetic pathway. This Gallus gallus (Chicken) protein is Dolichyl pyrophosphate Man9GlcNAc2 alpha-1,3-glucosyltransferase.